Consider the following 135-residue polypeptide: Small ribosomal subunit protein uS12 (135 aa).

The segment at 1-24 (MPTINQLVRKGRHSKTTKSKSPAL) is disordered. A compositionally biased stretch (basic residues) spans 9 to 18 (RKGRHSKTTK). Residue aspartate 102 is modified to 3-methylthioaspartic acid.

It belongs to the universal ribosomal protein uS12 family. Part of the 30S ribosomal subunit. Contacts proteins S8 and S17. May interact with IF1 in the 30S initiation complex.

Functionally, with S4 and S5 plays an important role in translational accuracy. Its function is as follows. Interacts with and stabilizes bases of the 16S rRNA that are involved in tRNA selection in the A site and with the mRNA backbone. Located at the interface of the 30S and 50S subunits, it traverses the body of the 30S subunit contacting proteins on the other side and probably holding the rRNA structure together. The combined cluster of proteins S8, S12 and S17 appears to hold together the shoulder and platform of the 30S subunit. This is Small ribosomal subunit protein uS12 from Lactobacillus delbrueckii subsp. bulgaricus (strain ATCC 11842 / DSM 20081 / BCRC 10696 / JCM 1002 / NBRC 13953 / NCIMB 11778 / NCTC 12712 / WDCM 00102 / Lb 14).